A 412-amino-acid polypeptide reads, in one-letter code: Tyrosine--tRNA ligase (412 aa).

Residues 50–59 carry the 'HIGH' region motif; that stretch reads PTGTDIHLGH. Positions 244–248 match the 'KMSKS' region motif; that stretch reads KMSKS. Residue K247 coordinates ATP. The region spanning 348-411 is the S4 RNA-binding domain; it reads VKFFYLLSSL…IGKKIIKRFE (64 aa).

It belongs to the class-I aminoacyl-tRNA synthetase family. TyrS type 2 subfamily. In terms of assembly, homodimer.

The protein resides in the cytoplasm. It carries out the reaction tRNA(Tyr) + L-tyrosine + ATP = L-tyrosyl-tRNA(Tyr) + AMP + diphosphate + H(+). Its function is as follows. Catalyzes the attachment of tyrosine to tRNA(Tyr) in a two-step reaction: tyrosine is first activated by ATP to form Tyr-AMP and then transferred to the acceptor end of tRNA(Tyr). The sequence is that of Tyrosine--tRNA ligase from Prochlorococcus marinus (strain MIT 9312).